We begin with the raw amino-acid sequence, 601 residues long: Proteasome-associated ATPase (601 aa).

Positions 1-15 (MSGPRSGSGSGGSTG) are enriched in gly residues. A disordered region spans residues 1 to 31 (MSGPRSGSGSGGSTGRPGDAESRRSAYEKEA). The span at 18–31 (GDAESRRSAYEKEA) shows a compositional bias: basic and acidic residues. Residues 18-106 (GDAESRRSAY…LKEEVDRLAQ (89 aa)) adopt a coiled-coil conformation. 289–294 (GCGKTL) is an ATP binding site. The segment at 600-601 (YL) is docks into pockets in the proteasome alpha-ring.

This sequence belongs to the AAA ATPase family. As to quaternary structure, homohexamer. Assembles into a hexameric ring structure that caps the 20S proteasome core. Strongly interacts with the prokaryotic ubiquitin-like protein Pup through a hydrophobic interface; the interacting region of ARC lies in its N-terminal coiled-coil domain. There is one Pup binding site per ARC hexamer ring. Upon ATP-binding, the C-terminus of ARC interacts with the alpha-rings of the proteasome core, possibly by binding to the intersubunit pockets.

It participates in protein degradation; proteasomal Pup-dependent pathway. Its function is as follows. ATPase which is responsible for recognizing, binding, unfolding and translocation of pupylated proteins into the bacterial 20S proteasome core particle. May be essential for opening the gate of the 20S proteasome via an interaction with its C-terminus, thereby allowing substrate entry and access to the site of proteolysis. Thus, the C-termini of the proteasomal ATPase may function like a 'key in a lock' to induce gate opening and therefore regulate proteolysis. In Frankia alni (strain DSM 45986 / CECT 9034 / ACN14a), this protein is Proteasome-associated ATPase.